Here is a 370-residue protein sequence, read N- to C-terminus: Pantothenate kinase 3 (370 aa).

Glu-138 functions as the Proton acceptor in the catalytic mechanism. 3 residues coordinate acetyl-CoA: Ser-192, Ser-195, and Arg-207.

Belongs to the type II pantothenate kinase family. In terms of assembly, homodimer. In terms of tissue distribution, highly expressed in the liver.

The protein localises to the cytoplasm. The enzyme catalyses (R)-pantothenate + ATP = (R)-4'-phosphopantothenate + ADP + H(+). It functions in the pathway cofactor biosynthesis; coenzyme A biosynthesis; CoA from (R)-pantothenate: step 1/5. With respect to regulation, subject to allosteric regulation, exists in two distinct conformational states, a catalytically incompetent (or open) conformation stabilized by the binding of acetyl(acyl)-CoA, and a catalytically competent (or closed) conformation stabilized by ATP-binding. Inhibited by acetyl-CoA and its thioesters which act as allosteric inhibitors and compete with the ATP-binding site. Inhibited by sulfonylureas and thiazolidinediones. Activated by oleoylethanolamide, palmitoyl-carnitine and oleoyl-carnitine. Its function is as follows. Catalyzes the phosphorylation of pantothenate to generate 4'-phosphopantothenate in the first and rate-determining step of coenzyme A (CoA) synthesis. The polypeptide is Pantothenate kinase 3 (PANK3) (Homo sapiens (Human)).